A 376-amino-acid chain; its full sequence is Probable ATP-dependent RNA helicase YfmL (376 aa).

Residues 35–205 enclose the Helicase ATP-binding domain; it reads AQLIMDGKDV…RELAQEPEVL (171 aa). Position 48-55 (48-55) interacts with ATP; it reads SPTGTGKT. A DEAD box motif is present at residues 153–156; it reads DETD. The Helicase C-terminal domain maps to 231 to 374; the sequence is KLLQKLSRLE…EAVYAGGKLK (144 aa).

This sequence belongs to the DEAD box helicase family.

The catalysed reaction is ATP + H2O = ADP + phosphate + H(+). In terms of biological role, a probable DEAD-box RNA helicase that plays a role in ribosomal 50S subunit assembly. May be a non-specific RNA helicase. This chain is Probable ATP-dependent RNA helicase YfmL (yfmL), found in Bacillus subtilis (strain 168).